The following is an 89-amino-acid chain: UPF0335 protein OCAR_5086/OCA5_c28780 (89 aa).

It belongs to the UPF0335 family.

This Afipia carboxidovorans (strain ATCC 49405 / DSM 1227 / KCTC 32145 / OM5) (Oligotropha carboxidovorans) protein is UPF0335 protein OCAR_5086/OCA5_c28780.